Consider the following 384-residue polypeptide: Anhydro-N-acetylmuramic acid kinase (384 aa).

17 to 24 (GTSMDGVD) lines the ATP pocket.

Belongs to the anhydro-N-acetylmuramic acid kinase family.

It carries out the reaction 1,6-anhydro-N-acetyl-beta-muramate + ATP + H2O = N-acetyl-D-muramate 6-phosphate + ADP + H(+). Its pathway is amino-sugar metabolism; 1,6-anhydro-N-acetylmuramate degradation. The protein operates within cell wall biogenesis; peptidoglycan recycling. Catalyzes the specific phosphorylation of 1,6-anhydro-N-acetylmuramic acid (anhMurNAc) with the simultaneous cleavage of the 1,6-anhydro ring, generating MurNAc-6-P. Is required for the utilization of anhMurNAc either imported from the medium or derived from its own cell wall murein, and thus plays a role in cell wall recycling. This is Anhydro-N-acetylmuramic acid kinase from Burkholderia thailandensis (strain ATCC 700388 / DSM 13276 / CCUG 48851 / CIP 106301 / E264).